Consider the following 129-residue polypeptide: Protachykinin-1 (129 aa).

The signal sequence occupies residues 1–19 (MKILVALAVFFLVSTQLFA). Positions 20–56 (EEIGANDDLNYWSDWYDSDQIKEELPEPFEHLLQRIA) are excised as a propeptide. Methionine amide is present on residues M68 and M107.

Belongs to the tachykinin family. In terms of processing, the substance P form is cleaved at Pro-59 by the prolyl endopeptidase FAP (seprase) activity (in vitro). Substance P is also cleaved and degraded by Angiotensin-converting enzyme (ACE) and neprilysin (MME).

The protein localises to the secreted. Its function is as follows. Tachykinins are active peptides which excite neurons, evoke behavioral responses, are potent vasodilators and secretagogues, and contract (directly or indirectly) many smooth muscles. The sequence is that of Protachykinin-1 (TAC1) from Homo sapiens (Human).